We begin with the raw amino-acid sequence, 1907 residues long: Receptor-type tyrosine-protein phosphatase F (1907 aa).

Residues 1–29 form the signal peptide; that stretch reads MAPEPAPGRTMVPLVPALVMLGLVAGAHG. Residues 30–1263 lie on the Extracellular side of the membrane; that stretch reads DSKPVFIKVP…QQQEEPEMLW (1234 aa). Ig-like C2-type domains lie at 33–123, 135–224, and 232–314; these read PVFI…AKLS, PSID…ANLY, and PRFS…AQVT. Cysteine 54 and cysteine 107 are disulfide-bonded. Heparin is bound at residue 68 to 77; the sequence is KKGKKVSSQR. Residue asparagine 117 is glycosylated (N-linked (GlcNAc...) asparagine). Residues cysteine 156 and cysteine 207 are joined by a disulfide bond. 2 N-linked (GlcNAc...) asparagine glycosylation sites follow: asparagine 250 and asparagine 295. Cysteine 253 and cysteine 298 are joined by a disulfide. Fibronectin type-III domains are found at residues 321–411, 416–510, 514–604, 609–706, 711–819, 820–914, 918–1010, and 1014–1098; these read PPID…TGEQ, PPRR…TQQG, QPAD…TAQS, PPQK…TDED, PPRK…TTGA, VPGR…PEDL, FPQN…TMPV, and FAKN…TAPD. The segment at 398 to 417 is disordered; the sequence is GPPSEAVRARTGEQAPSSPP. The segment at 693–712 is disordered; it reads GPESSPVLVRTDEDVPSGPP. Asparagine 721 carries an N-linked (GlcNAc...) asparagine glycan. Residue asparagine 966 is glycosylated (N-linked (GlcNAc...) asparagine). The helical transmembrane segment at 1264-1284 threads the bilayer; the sequence is VTGPVLAVILIILIVIAILLF. Over 1285 to 1907 the chain is Cytoplasmic; that stretch reads KRKRTHSPSS…YLGSFDHYAT (623 aa). At serine 1305 the chain carries Phosphoserine. Tyrosine-protein phosphatase domains are found at residues 1352-1607 and 1639-1898; these read FSQE…LLEA and MELE…ALEY. Substrate contacts are provided by residues aspartate 1516, 1548–1554, and glutamine 1592; that span reads CSAGVGR. Residue cysteine 1548 is the Phosphocysteine intermediate of the active site. The active-site Phosphocysteine intermediate is cysteine 1839.

Belongs to the protein-tyrosine phosphatase family. Receptor class 2A subfamily. In terms of assembly, interacts with GRIP1. Interacts with PPFIA1, PPFIA2 and PPFIA3. Interacts with INSR.

Its subcellular location is the membrane. The catalysed reaction is O-phospho-L-tyrosyl-[protein] + H2O = L-tyrosyl-[protein] + phosphate. Possible cell adhesion receptor. It possesses an intrinsic protein tyrosine phosphatase activity (PTPase) and dephosphorylates EPHA2 regulating its activity. Functionally, the first PTPase domain has enzymatic activity, while the second one seems to affect the substrate specificity of the first one. The protein is Receptor-type tyrosine-protein phosphatase F (PTPRF) of Homo sapiens (Human).